The following is a 501-amino-acid chain: Vitamin D 25-hydroxylase (501 aa).

The signal sequence occupies residues 1–26 (MWKLWRAEEGAAALGGALFLLLFALG). Substrate is bound at residue Ala-250. Cys-448 contacts heme.

It belongs to the cytochrome P450 family. Homodimer. Heme serves as cofactor.

Its subcellular location is the endoplasmic reticulum membrane. It localises to the microsome membrane. The catalysed reaction is calciol + reduced [NADPH--hemoprotein reductase] + O2 = calcidiol + oxidized [NADPH--hemoprotein reductase] + H2O + H(+). It carries out the reaction vitamin D2 + reduced [NADPH--hemoprotein reductase] + O2 = 25-hydroxyvitamin D2 + oxidized [NADPH--hemoprotein reductase] + H2O + H(+). The enzyme catalyses 1alpha-hydroxyvitamin D2 + reduced [NADPH--hemoprotein reductase] + O2 = 1alpha,25-dihydroxyvitamin D2 + oxidized [NADPH--hemoprotein reductase] + H2O + H(+). It catalyses the reaction alfacalcidol + reduced [NADPH--hemoprotein reductase] + O2 = calcitriol + oxidized [NADPH--hemoprotein reductase] + H2O + H(+). It functions in the pathway hormone biosynthesis; vitamin D biosynthesis. Its function is as follows. A cytochrome P450 monooxygenase involved in activation of vitamin D precursors. Catalyzes hydroxylation at C-25 of both forms of vitamin D, vitamin D(2) and D(3) (calciol). Can metabolize vitamin D analogs/prodrugs 1alpha-hydroxyvitamin D(2) (doxercalciferol) and 1alpha-hydroxyvitamin D(3) (alfacalcidol) forming 25-hydroxy derivatives. Mechanistically, uses molecular oxygen inserting one oxygen atom into a substrate, and reducing the second into a water molecule, with two electrons provided by NADPH via cytochrome P450 reductase (CPR; NADPH-ferrihemoprotein reductase). This Homo sapiens (Human) protein is Vitamin D 25-hydroxylase (CYP2R1).